We begin with the raw amino-acid sequence, 144 residues long: Putative pre-16S rRNA nuclease (144 aa).

Belongs to the YqgF nuclease family.

The protein resides in the cytoplasm. Its function is as follows. Could be a nuclease involved in processing of the 5'-end of pre-16S rRNA. In Ralstonia nicotianae (strain ATCC BAA-1114 / GMI1000) (Ralstonia solanacearum), this protein is Putative pre-16S rRNA nuclease.